The sequence spans 457 residues: Exodeoxyribonuclease 7 large subunit (457 aa).

It belongs to the XseA family. In terms of assembly, heterooligomer composed of large and small subunits.

It is found in the cytoplasm. The enzyme catalyses Exonucleolytic cleavage in either 5'- to 3'- or 3'- to 5'-direction to yield nucleoside 5'-phosphates.. Its function is as follows. Bidirectionally degrades single-stranded DNA into large acid-insoluble oligonucleotides, which are then degraded further into small acid-soluble oligonucleotides. The sequence is that of Exodeoxyribonuclease 7 large subunit from Enterobacter sp. (strain 638).